The sequence spans 387 residues: Killer cell lectin-like receptor subfamily G member 2 (387 aa).

The segment at 1 to 105 is disordered; the sequence is MEPPQVPAEA…SGEPAPASWA (105 aa). The span at 15 to 27 shows a compositional bias: basic and acidic residues; the sequence is ASEDSPRPERTGW. Residue Ser143 is modified to Phosphoserine. A disordered region spans residues 155 to 174; the sequence is QWLPRAPSPGSTWSRGSPLA. Residues 241-261 form a helical membrane-spanning segment; it reads WALVVMAVLLAVCTVAVVALA. One can recognise a C-type lectin domain in the interval 278–383; the sequence is SQEQCYYLSE…CSSPRPWVCA (106 aa). Intrachain disulfides connect Cys299–Cys382 and Cys361–Cys374.

Its subcellular location is the membrane. The sequence is that of Killer cell lectin-like receptor subfamily G member 2 (Klrg2) from Mus musculus (Mouse).